Here is a 494-residue protein sequence, read N- to C-terminus: Transcriptional regulator of yeast form adherence 3 (494 aa).

One can recognise an SPX domain in the interval 1–360 (MKFAKTLERT…SLGIQKTFPK (360 aa)). Residues 398 to 437 (CPICMNIAYKPIRLSCGHLFCVRCLVKMKQDDKTSCPLCR) form an RING-type zinc finger.

The protein localises to the nucleus. Transcription factor required for yeast cell adherence to silicone substrate. In Candida albicans (strain SC5314 / ATCC MYA-2876) (Yeast), this protein is Transcriptional regulator of yeast form adherence 3 (TRY3).